The primary structure comprises 305 residues: Tyrosine recombinase XerC (305 aa).

Positions 1-94 constitute a Core-binding (CB) domain; it reads MSSVDEFLTY…ACRSYYAWLL (94 aa). The Tyr recombinase domain maps to 115 to 292; it reads KLPQVLDADE…DFQHLAKVYD (178 aa). Catalysis depends on residues arginine 154, lysine 178, histidine 244, arginine 247, and histidine 270. Tyrosine 279 (O-(3'-phospho-DNA)-tyrosine intermediate) is an active-site residue.

Belongs to the 'phage' integrase family. XerC subfamily. As to quaternary structure, forms a cyclic heterotetrameric complex composed of two molecules of XerC and two molecules of XerD.

It is found in the cytoplasm. Its function is as follows. Site-specific tyrosine recombinase, which acts by catalyzing the cutting and rejoining of the recombining DNA molecules. The XerC-XerD complex is essential to convert dimers of the bacterial chromosome into monomers to permit their segregation at cell division. It also contributes to the segregational stability of plasmids. This chain is Tyrosine recombinase XerC, found in Xanthomonas axonopodis pv. citri (strain 306).